Consider the following 164-residue polypeptide: Crossover junction endodeoxyribonuclease RuvC (164 aa).

Catalysis depends on residues Asp-7, Glu-67, and Asp-139. Mg(2+)-binding residues include Asp-7, Glu-67, and Asp-139.

Belongs to the RuvC family. Homodimer which binds Holliday junction (HJ) DNA. The HJ becomes 2-fold symmetrical on binding to RuvC with unstacked arms; it has a different conformation from HJ DNA in complex with RuvA. In the full resolvosome a probable DNA-RuvA(4)-RuvB(12)-RuvC(2) complex forms which resolves the HJ. It depends on Mg(2+) as a cofactor.

It localises to the cytoplasm. The catalysed reaction is Endonucleolytic cleavage at a junction such as a reciprocal single-stranded crossover between two homologous DNA duplexes (Holliday junction).. The RuvA-RuvB-RuvC complex processes Holliday junction (HJ) DNA during genetic recombination and DNA repair. Endonuclease that resolves HJ intermediates. Cleaves cruciform DNA by making single-stranded nicks across the HJ at symmetrical positions within the homologous arms, yielding a 5'-phosphate and a 3'-hydroxyl group; requires a central core of homology in the junction. The consensus cleavage sequence is 5'-(A/T)TT(C/G)-3'. Cleavage occurs on the 3'-side of the TT dinucleotide at the point of strand exchange. HJ branch migration catalyzed by RuvA-RuvB allows RuvC to scan DNA until it finds its consensus sequence, where it cleaves and resolves the cruciform DNA. In Geobacter metallireducens (strain ATCC 53774 / DSM 7210 / GS-15), this protein is Crossover junction endodeoxyribonuclease RuvC.